The following is a 473-amino-acid chain: Fumarate hydratase class II 2 (473 aa).

The interval 1-28 (MAKSARTKTARPATRTETDSFGPIEVPS) is disordered. Substrate is bound by residues 108–110 (SGT), 139–142 (HPND), 149–151 (SSN), and Thr-197. The Proton donor/acceptor role is filled by His-198. Ser-328 is an active-site residue. Substrate is bound by residues Ser-329 and 334 to 336 (KVN).

It belongs to the class-II fumarase/aspartase family. Fumarase subfamily. Homotetramer.

Its subcellular location is the cytoplasm. It catalyses the reaction (S)-malate = fumarate + H2O. Its pathway is carbohydrate metabolism; tricarboxylic acid cycle; (S)-malate from fumarate: step 1/1. Its function is as follows. Involved in the TCA cycle. Catalyzes the stereospecific interconversion of fumarate to L-malate. In Bradyrhizobium diazoefficiens (strain JCM 10833 / BCRC 13528 / IAM 13628 / NBRC 14792 / USDA 110), this protein is Fumarate hydratase class II 2.